Consider the following 571-residue polypeptide: Proline--tRNA ligase (571 aa).

Belongs to the class-II aminoacyl-tRNA synthetase family. ProS type 1 subfamily. In terms of assembly, homodimer.

The protein resides in the cytoplasm. The enzyme catalyses tRNA(Pro) + L-proline + ATP = L-prolyl-tRNA(Pro) + AMP + diphosphate. Its function is as follows. Catalyzes the attachment of proline to tRNA(Pro) in a two-step reaction: proline is first activated by ATP to form Pro-AMP and then transferred to the acceptor end of tRNA(Pro). As ProRS can inadvertently accommodate and process non-cognate amino acids such as alanine and cysteine, to avoid such errors it has two additional distinct editing activities against alanine. One activity is designated as 'pretransfer' editing and involves the tRNA(Pro)-independent hydrolysis of activated Ala-AMP. The other activity is designated 'posttransfer' editing and involves deacylation of mischarged Ala-tRNA(Pro). The misacylated Cys-tRNA(Pro) is not edited by ProRS. This is Proline--tRNA ligase from Pasteurella multocida (strain Pm70).